Consider the following 464-residue polypeptide: ATP-dependent protease ATPase subunit HslU (464 aa).

Residues Val18, 60-65, Asp277, Glu342, and Arg414 contribute to the ATP site; that span reads GVGKTE.

Belongs to the ClpX chaperone family. HslU subfamily. A double ring-shaped homohexamer of HslV is capped on each side by a ring-shaped HslU homohexamer. The assembly of the HslU/HslV complex is dependent on binding of ATP.

The protein resides in the cytoplasm. In terms of biological role, ATPase subunit of a proteasome-like degradation complex; this subunit has chaperone activity. The binding of ATP and its subsequent hydrolysis by HslU are essential for unfolding of protein substrates subsequently hydrolyzed by HslV. HslU recognizes the N-terminal part of its protein substrates and unfolds these before they are guided to HslV for hydrolysis. The polypeptide is ATP-dependent protease ATPase subunit HslU (Lactobacillus delbrueckii subsp. bulgaricus (strain ATCC BAA-365 / Lb-18)).